The sequence spans 250 residues: Type III pantothenate kinase (250 aa).

Residue 6–13 (DVGNTNTV) coordinates ATP. Residue 103-106 (GADR) coordinates substrate. The active-site Proton acceptor is the aspartate 105. Residue aspartate 125 participates in K(+) binding. Residue threonine 128 coordinates ATP. A substrate-binding site is contributed by threonine 180.

This sequence belongs to the type III pantothenate kinase family. In terms of assembly, homodimer. The cofactor is NH4(+). K(+) serves as cofactor.

It localises to the cytoplasm. The enzyme catalyses (R)-pantothenate + ATP = (R)-4'-phosphopantothenate + ADP + H(+). It participates in cofactor biosynthesis; coenzyme A biosynthesis; CoA from (R)-pantothenate: step 1/5. In terms of biological role, catalyzes the phosphorylation of pantothenate (Pan), the first step in CoA biosynthesis. The polypeptide is Type III pantothenate kinase (Frankia alni (strain DSM 45986 / CECT 9034 / ACN14a)).